The sequence spans 2603 residues: MVPYYQPASSCGSNTMAAMDEHQHNEDATIPIAIIGMSCRFPGNATSPEKLWELCAQGRSAWSSIPKSRFRQEGFYNPNAERVGTSHVVGGHFLEEDPSLFDASFFNLSAEAAKTMDPQFRLQLESVYEAMESAGITLEHIAGSDTSVYAGACFRDYHDSLVRDPDLVPRFLLTGNGAAMSSNRVSHFYDLRGASMTVDTGCSTTLTALHLACQGLRNRESKTSIVTGANVILNPDMFVTMSSLGLLGPEGKSHTFDARANGYGRGEGIATVIIKRLDDALRAQDPIRCIIRGTALNQDGRTATLTSPSQTAQSDLIRACYRAAALDPNDTAFLAAHGTGTRTGDAVEIAAAADVFGEKRSPERPLWIGSVKTNIGHSEATSGLASVIQAALALEKGLIPPNINFKEPNEKLGQVSAAVRVPSNLQKWPSVSGVRRASVNNFGYGGANAHVILESGIPGHTPIANGSGRSNGTGNGHNGANGTTNGHNGTNGTTNGHFDATQATNGHYGTDETPDYAPLDSFVISISAKEEASARSMVTNLADYLRTLQVQDETKHFKSIAHTLGSHRSMFKWTAAKSITGPEELIAAAEGGQFQASRALERTRLGFVFTGQGAQWFAMGRELINTYPVFRQSLDRADRYLKEFGCEWSIIDELSRDAENSNVNDMTLSPPLCTAVQISLVQLLESWGIVPTAVTGHSSGEIAAAYAAGALDFKSAMAVTYFRGEVGLACQDKIVGKGGMIAVGLGPEDAEDRIARVQSGKIVVACINSQSSVTVSGDLSGIVELEDLLKAEGVFARRVKVQAAYHSHHMQVIANGYLTSLKDMLKPTKKFGKIIYSSPTTGRRETNAKLMASAQHWVNNMLSPVRFAESFQNMCFSNRNSSQSEEIFQDVDIVLEVGPHGMLQGPIQQMMSLPIFERARLPYISCLLRGQSAVHTMQTVAAGLMGWGYRVDMVAVNFPQGTYGVKILHDLPSYPWNHDNSHWWEPRLNKAHRQRVHPPHDLLGSLIVGRDLREPTWRHFIRVQDIPWIRDHVVQSALVYPGAGFICMAMEAMVQLHELRDSQSRKVAGYRLAEVDILRAMLIPDTSEGLEAHISLRPCSTKLLLTNEWYDFCVSSVGDDDKFVDHCRGRITIEFDTSGSADTPRTSLRERSRSTGLMRSVDPSNLYSFLRAQGIYHGPIFQNLKTISSRKDHSESSFVVANTASVMPNGFQSPHVIHPTTLDSIFQGAYTALPGAGLDQNTAMIPRSIQELYLSSALTSDVGQCLVSDTSLIRYDGQSFTVNVDVSSKADSEHTPVLEIKGLRNQSVGQMAPQPGDSSNNDLCFKLDWAPDISSVKQERLKEKFGFPLDPTEADIIMGLRQACIHFIHRSLQSLTAPDRDQLDWHQKRFYDWMVLQIQLAEEDRLAPNSSAWLQCSSSDEQKLLENVRASSVNGQMVVHVGKSMLAILRHEIAPLELMLQDKLLYRYYTDAIKWDRSYQQIDQLVKLHAHKCPTAKIIEIGAGTGGCTRAVLDALSNQGIARCAQYDFTDVSSGFFEAAQQKFAAFDDVIRFQKLDIEKDIEMQGFECGSYDLVIASQVLHATGKMEHTMANVRKLLKPGGKLLLVETTRDEMDLQLVFGLLPGWWLSSEEERQMSPSLSTNSWEKVLKKTGFDGLDIELRDCDSDEFYSFSVMMATASSTIASSSMAFAIVYGEVPLPDQFLDDMKTAISSSAVSDPVVGHLDSIDATGKFCIFIEDPETDILSSPDEKSYASIQKLVTRCKGLIWVSRGGAMHGTRPNSSLKTGLLRTLRLEYTEKRFISLDLDSARPQWNHDSITTINEVLCGALAQNADSSIKDSEFAEQDGQLFVPRISCDIARNEDLSSDSNSPAQMEPFHQPGKLLQMGIKTPGLIDTLQFSKTDATDNLPNDYIEIEPKAFGLNFRDVMVAMGQLEESIMGFECAGVVRRVGPSSAGHNIKVGDRVCALLGGQWTNTVRVHWHSVAPIPQAMDWETAASIPIVFVTAYISLVKIARMQAGETVLIHAASGGVGQAAIILAKHVGAEIFATVGTDEKRDLLIKEYKIPDDHIFSSRNALFAKSIRQRTNGKGVDVVLNCLAGGLLQESFDCLADFGRFIEIGKRDIELNHCLNMGMFARSATFTAVDLIAIGRDRSYMFAEALPKIMTLLQEKAIRPVTPISIYKIGDIETAFRLMQAGKHMGKIVITAPEDAMVPVITRPPKLQLRPDASYLIVGGLGGIGRSLCKNFVENGARSLVLLSRNANVSQQSGEFLDELRSTGCIVGVVDCDISSKTQVEATMLRLKKDMLPIRGIVHAGMVLQDSVFERMSLDDYNTAIRPKVQGSWNLHSGLSDCDLDFFIMLSSLAGVSGSASQANYTAGGAYQDALAKYRRAQGLSAVSIDLGMVQSVGYVAETKGVAERLVRMGYSPISEMEVLKIVEHAITNPPPEASSAQIITGISTKPGRHWTESSWLQDARFATLRERARDVKELSNSQGGAQDKQLAAGQELSMATSLVEAIDVVGRAITAKLATMFLIAAESIIASKSLSEYGVDSLVAVELRNWLAAQLSSDVSVFDVTQSQSLTALATTVATKSSRIDKSLLVA.

A Ketosynthase family 3 (KS3) domain is found at 29-455; sequence TIPIAIIGMS…GANAHVILES (427 aa). Active-site for beta-ketoacyl synthase activity residues include C202, H337, and H377. Positions 463 to 512 are disordered; the sequence is IANGSGRSNGTGNGHNGANGTTNGHNGTNGTTNGHFDATQATNGHYGTDE. Residues 469–479 show a composition bias toward gly residues; it reads RSNGTGNGHNG. Low complexity predominate over residues 480–497; that stretch reads ANGTTNGHNGTNGTTNGH. Residues 608–931 are malonyl-CoA:ACP transacylase (MAT) domain; that stretch reads VFTGQGAQWF…PYISCLLRGQ (324 aa). The tract at residues 1000–1138 is N-terminal hotdog fold; sequence HDLLGSLIVG…GRITIEFDTS (139 aa). Residues 1000 to 1314 form the PKS/mFAS DH domain; the sequence is HDLLGSLIVG…NQSVGQMAPQ (315 aa). Residues 1000 to 1314 are dehydratase (DH) domain; sequence HDLLGSLIVG…NQSVGQMAPQ (315 aa). The Proton acceptor; for dehydratase activity role is filled by H1032. Residues 1157–1314 are C-terminal hotdog fold; that stretch reads LMRSVDPSNL…NQSVGQMAPQ (158 aa). D1223 (proton donor; for dehydratase activity) is an active-site residue. The methyltransferase (CMet) domain stretch occupies residues 1465–1665; that stretch reads LYRYYTDAIK…GLDIELRDCD (201 aa). The interval 1892–2205 is enoyl reductase (ER) (ER) domain; it reads GLIDTLQFSK…AGKHMGKIVI (314 aa). The tract at residues 2228–2406 is ketoreductase (KR) domain; the sequence is ASYLIVGGLG…AVSIDLGMVQ (179 aa). The Carrier domain occupies 2516-2593; it reads EAIDVVGRAI…ALATTVATKS (78 aa). Residue S2553 is modified to O-(pantetheine 4'-phosphoryl)serine.

It functions in the pathway secondary metabolite biosynthesis. Functionally, highly reducing polyketide synthase (HR-PKS); part of the gene cluster that mediates the biosynthesis of squalestatin S1 (SQS1, also known as zaragozic acid A), a lead compound for the treatment of hyper-cholesterolemia by targeting squalene synthase (SS). Pks1 is responsible for the biosynthesis of the tetraketide sidechain of SQS1. The biosynthesis must involve 3 rounds of chain extension. After the first and second rounds methyl-transfer occurs, and in all rounds of extension the ketoreductase and dehydratase are active. The enoyl reductase and C-MeT are not active in the final round of extension. The polypeptide is Squalestatin tetraketide synthase (Phoma sp. (strain C2932)).